The primary structure comprises 168 residues: Endoribonuclease YbeY (168 aa).

Residues H122, H126, and H132 each contribute to the Zn(2+) site.

This sequence belongs to the endoribonuclease YbeY family. The cofactor is Zn(2+).

It is found in the cytoplasm. Its function is as follows. Single strand-specific metallo-endoribonuclease involved in late-stage 70S ribosome quality control and in maturation of the 3' terminus of the 16S rRNA. The sequence is that of Endoribonuclease YbeY from Brucella abortus (strain 2308).